A 371-amino-acid chain; its full sequence is uncharacterized protein (371 aa).

33–40 (GPLNSGKT) is a binding site for ATP.

It belongs to the archaeal ATPase family.

This is an uncharacterized protein from Methanocaldococcus jannaschii (strain ATCC 43067 / DSM 2661 / JAL-1 / JCM 10045 / NBRC 100440) (Methanococcus jannaschii).